A 66-amino-acid chain; its full sequence is MKTNDIRELTTAEIETKVKALKEELFNLRFQLATGQLENPTRIREVRKAIARMKTVVCEREIGINR.

This sequence belongs to the universal ribosomal protein uL29 family.

This chain is Large ribosomal subunit protein uL29, found in Bacillus mycoides (strain KBAB4) (Bacillus weihenstephanensis).